Consider the following 360-residue polypeptide: Lipid-A-disaccharide synthase (360 aa).

The protein belongs to the LpxB family.

It carries out the reaction a lipid X + a UDP-2-N,3-O-bis[(3R)-3-hydroxyacyl]-alpha-D-glucosamine = a lipid A disaccharide + UDP + H(+). It functions in the pathway bacterial outer membrane biogenesis; LPS lipid A biosynthesis. Its function is as follows. Condensation of UDP-2,3-diacylglucosamine and 2,3-diacylglucosamine-1-phosphate to form lipid A disaccharide, a precursor of lipid A, a phosphorylated glycolipid that anchors the lipopolysaccharide to the outer membrane of the cell. The chain is Lipid-A-disaccharide synthase from Helicobacter pylori (strain G27).